We begin with the raw amino-acid sequence, 355 residues long: uncharacterized protein (355 aa).

The N-terminal 49 residues, 1 to 49, are a transit peptide targeting the chloroplast; the sequence is MPMTVVSGRFSTALLPTCFSLSRLHSVKYAAQRRVVFVSRSAHASSASV.

The protein belongs to the methyltransferase superfamily.

It localises to the plastid. It is found in the chloroplast. Its subcellular location is the plastoglobule. This is an uncharacterized protein from Arabidopsis thaliana (Mouse-ear cress).